Here is a 100-residue protein sequence, read N- to C-terminus: Pancreatic trypsin inhibitor (100 aa).

The first 21 residues, 1–21, serve as a signal peptide directing secretion; it reads MKMSRLCLSVALLVLLGTLAA. A propeptide spanning residues 22 to 35 is cleaved from the precursor; the sequence is STPGCDTSNQAKAQ. Residues 40–90 enclose the BPTI/Kunitz inhibitor domain; sequence CLEPPYTGPCKARIIRYFYNAKAGLCQTFVYGGCRAKRNNFKSAEDCMRTC. 3 disulfide bridges follow: cysteine 40–cysteine 90, cysteine 49–cysteine 73, and cysteine 65–cysteine 86. Positions 94 to 100 are excised as a propeptide; the sequence is IGPWENL.

It is found in the secreted. Inhibits trypsin, kallikrein, chymotrypsin, and plasmin. This is Pancreatic trypsin inhibitor from Bos taurus (Bovine).